The primary structure comprises 207 residues: Acyl-homoserine-lactone synthase (207 aa).

It belongs to the autoinducer synthase family.

The catalysed reaction is a fatty acyl-[ACP] + S-adenosyl-L-methionine = an N-acyl-L-homoserine lactone + S-methyl-5'-thioadenosine + holo-[ACP] + H(+). In terms of biological role, required for the synthesis of N-butanoyl-L-homoserine lactone (BHL), an autoinducer molecule which binds to AhyR. In Aeromonas hydrophila, this protein is Acyl-homoserine-lactone synthase (ahyI).